The primary structure comprises 175 residues: Sec-independent protein translocase protein TatB (175 aa).

Residues 1 to 21 (MLDLGLSKMALIGVVALVVLG) traverse the membrane as a helical segment. 2 disordered regions span residues 96-115 (VSPG…AASG) and 153-175 (VQSG…ARFL). Positions 160–175 (VARHRPASLRRPARFL) are enriched in basic residues.

This sequence belongs to the TatB family. The Tat system comprises two distinct complexes: a TatABC complex, containing multiple copies of TatA, TatB and TatC subunits, and a separate TatA complex, containing only TatA subunits. Substrates initially bind to the TatABC complex, which probably triggers association of the separate TatA complex to form the active translocon.

It is found in the cell inner membrane. Its function is as follows. Part of the twin-arginine translocation (Tat) system that transports large folded proteins containing a characteristic twin-arginine motif in their signal peptide across membranes. Together with TatC, TatB is part of a receptor directly interacting with Tat signal peptides. TatB may form an oligomeric binding site that transiently accommodates folded Tat precursor proteins before their translocation. The sequence is that of Sec-independent protein translocase protein TatB from Burkholderia mallei (strain ATCC 23344).